Reading from the N-terminus, the 2769-residue chain is MALALWVFGLLDLICLASANIFEYQVDAQPLRPCELQRERAFLKREDYVPQCAEDGSFQTVQCGKDGASCWCVDADGREVPGSRQPGRPAACLSFCQLQKQQILLSSYINSTATSYLPQCQDSGDYSPVQCDLRRRQCWCVDAEGMEVYGTRQQGRPARCPRSCEIRNRRLLHGVGDRSPPQCSPDGAFRPVQCKLVNTTDMMIFDLVHSYSRFPDAFVTFSSFRSRFPEVSGYCYCADSQGRELAETGLELLLDEIYDTIFAGLDLASTFAETTLYRILQRRFLAVQLVISGRFRCPTKCEVERFAATSFRHPYVPSCHPDGEYQAAQCQQGGPCWCVDSRGQEIPGTRQRGEPPSCAEDQSCPSERRRAFSRLRFGPSGYFSRRSLLLAPEEGPVSQRFARFTASCPPSIKELFLDSGIFQPMLQGRDTRFVAPESLKEAIRGLFPSRELARLALQFTTNAKRLQQNLFGGRFLVKVGQFNLSGALGTRGTFNFSHFFQQLGLPGFQDGRALADLAKPLSVGLNSNPASEAPKASKIDVALRKPVVGSFGFEVNLQENQNALQFLSSFLELPEFLLFLQHAISVPEDIARDLGDVMEMVFSSQGCGQAPGSLFVPACTAEGSYEEVQCFAGDCWCVDAQGRELAGSRVRGGRPRCPTECEKQRARMQSLLGSQPAGSSLFVPACTSKGNFLPVQCFNSECYCVDTEGQPIPGTRSALGEPKKCPSPCQLQAERAFLGTVRTLVSNPSTLPALSSIYIPQCSASGQWSPVQCDGPPEQAFEWYERWEAQNSAGQALTPAELLMKIMSYREAASRNFRLFIQNLYEAGQQGIFPGLARYSSFQDVPVSVLEGNQTQPGGNVFLEPYLFWQILNGQLDRYPGPYSDFSAPLAHFDLRSCWCVDEAGQKLEGTRNEPNKVPACPGSCEEVKLRVLQFIREAEEIVTYSNSSRFPLGESFLAAKGIRLTDEELAFPPLSPSRETFLEKFLSGSDYAIRLAAQSTFDFYQRRLVTLAESPRAPSPVWSSAYLPQCDAFGGWEPVQCHAATGHCWCVDGKGEYVPTSLTARSRQIPQCPTSCERLRASGLLSSWKQAGVQAEPSPKDLFIPTCLETGEFARLQASEAGTWCVDPASGEGVPPGTNSSAQCPSLCEVLQSGVPSRRTSPGYSPACRAEDGGFSPVQCDPAQGSCWCVLGSGEEVPGTRVAGSQPACESPQCPLPFSVADVAGGAILCERASGLGAAAGQRCQLRCSQGYRSAFPPEPLLCSVQRRRWESRPPQPRACQRPQFWQTLQTQAQFQLLLPLGKVCSADYSGLLLAFQVFLLDELTARGFCQIQVKTAGTPVSIPVCDDSSVKVECLSRERLGVNITWKLQLVDAPPASLPDLQDVEEALAGKYLAGRFADLIQSGTFQLHLDSKTFSADTSIRFLQGDRFGTSPRTQFGCLEGFGRVVAASDASQDALGCVKCPEGSYFQDEQCIPCPAGFYQEQAGSLACVPCPEGRTTVYAGAFSQTHCVTDCQKNEVGLQCDQDSQYRASQRDRTSGKAFCVDGEGRRLPWTEAEAPLVDAQCLVMRKFEKLPESKVIFSADVAVMVRSEVPGSESSLMQCLADCALDEACGFLTVSTAGSEVSCDFYAWASDSIACTTSGRSEDALGTSQATSFGSLQCQVKVRSREGDPLAVYLKKGQEFTITGQKRFEQTGFQSALSGMYSPVTFSASGASLAEVHLFCLLACDHDSCCDGFILVQVQGGPLLCGLLSSPDVLLCHVRDWRDPAEAQANASCPGVTYDQDSRQVTLRLGGQEIRGLTPLEGTQDTLTSFQQVYLWKDSDMGSRSESMGCRRDTEPRPASPSETDLTTGLFSPVDLIQVIVDGNVSLPSQQHWLFKHLFSLQQANLWCLSRCAGEPSFCQLAEVTDSEPLYFTCTLYPEAQVCDDILESSPKGCRLILPRRPSALYRKKVVLQDRVKNFYNRLPFQKLTGISIRNKVPMSDKSISSGFFECERLCDMDPCCTGFGFLNVSQLKGGEVTCLTLNSLGLQTCSEEYGGVWRILDCGSPDTEVRTYPFGWYQKPVSPSDAPSFCPSVALPALTENVALDSWQSLALSSVIVDPSIRNFDVAHISTAAVGNFSAARDRCLWECSRHQDCLVTTLQTQPGAVRCMFYADTQSCTHSLQAQNCRLLLHEEATYIYRKPNIPLPGFGTSSPSVPIATHGQLLGRSQAIQVGTSWKPVDQFLGVPYAAPPLGEKRFRAPEHLNWTGSWEATKPRARCWQPGIRTPTPPGVSEDCLYLNVFVPQNMAPNASVLVFFHNAAEGKGSGDRPAVDGSFLAAVGNLIVVTASYRTGIFGFLSSGSSELSGNWGLLDQVVALTWVQTHIQAFGGDPRRVTLAADRGGADIASIHLVTTRAANSRLFRRAVLMGGSALSPAAVIRPERARQQAAALAKEVGCPSSSVQEMVSCLRQEPARILNDAQTKLLAVSGPFHYWGPVVDGQYLRETPARVLQRAPRVKVDLLIGSSQDDGLINRAKAVKQFEESQGRTSSKTAFYQALQNSLGGEAADAGVQAAATWYYSLEHDSDDYASFSRALEQATRDYFIICPVIDMASHWARTVRGNVFMYHAPESYSHSSLELLTDVLYAFGLPFYPAYEGQFTLEEKSLSLKIMQYFSNFIRSGNPNYPHEFSRRAPEFAAPWPDFVPRDGAESYKELSVLLPNRQGLKKADCSFWSKYIQSLKASADETKDGPSADSEEEDQPAGSGLTEDLLGLPELASKTYSK.

The signal sequence occupies residues 1-19 (MALALWVFGLLDLICLASA). Residue tyrosine 24 is modified to Iodotyrosine; alternate. A Sulfotyrosine; alternate modification is found at tyrosine 24. Tyrosine 24 carries the post-translational modification Thyroxine; alternate. Tyrosine 24 carries the post-translational modification Triiodothyronine; alternate. Thyroglobulin type-1 domains lie at 31-92 (LRPC…PAAC), 93-160 (LSFC…PARC), 161-297 (PRSC…RFRC), and 298-358 (PTKC…PPSC). Intrachain disulfides connect cysteine 34–cysteine 52, cysteine 63–cysteine 70, cysteine 72–cysteine 92, cysteine 96–cysteine 120, cysteine 131–cysteine 138, cysteine 140–cysteine 160, cysteine 164–cysteine 183, and cysteine 194–cysteine 235. An Iodotyrosine modification is found at tyrosine 108. The N-linked (GlcNAc...) (complex) asparagine; alternate glycan is linked to asparagine 110. Asparagine 110 carries N-linked (GlcNAc...) (hybrid) asparagine; alternate glycosylation. Tyrosine 149 is modified (iodotyrosine; alternate). Tyrosine 149 is modified (diiodotyrosine; alternate). 2 positions are modified to iodotyrosine: tyrosine 234 and tyrosine 258. 9 disulfide bridges follow: cysteine 301/cysteine 319, cysteine 330/cysteine 336, cysteine 338/cysteine 358, cysteine 364/cysteine 619, cysteine 408/cysteine 607, cysteine 630/cysteine 635, cysteine 637/cysteine 657, cysteine 661/cysteine 686, and cysteine 697/cysteine 702. 2 N-linked (GlcNAc...) (complex) asparagine; alternate glycosylation sites follow: asparagine 483 and asparagine 495. N-linked (GlcNAc...) (hybrid) asparagine; alternate glycans are attached at residues asparagine 483 and asparagine 495. Thyroglobulin type-1 domains lie at 604–657 (SQGC…RPRC), 658–725 (PTEC…PKKC), 726–921 (PSPC…VPAC), 922–1073 (PGSC…IPQC), 1074–1145 (PTSC…SAQC), and 1146–1210 (PSLC…QPAC). Position 703 is an iodotyrosine; alternate (tyrosine 703). Residue tyrosine 703 is modified to Thyroxine; alternate. Residue tyrosine 703 is modified to Triiodothyronine; alternate. Tyrosine 703 is subject to Diiodotyrosine; alternate. 16 disulfide bridges follow: cysteine 704/cysteine 725, cysteine 729/cysteine 762, cysteine 773/cysteine 898, cysteine 900/cysteine 921, cysteine 925/cysteine 1031, cysteine 1042/cysteine 1049, cysteine 1051/cysteine 1073, cysteine 1077/cysteine 1108, cysteine 1126/cysteine 1145, cysteine 1149/cysteine 1169, cysteine 1181/cysteine 1188, cysteine 1190/cysteine 1210, cysteine 1215/cysteine 1264, cysteine 1231/cysteine 1245, cysteine 1306/cysteine 1356, and cysteine 1331/cysteine 1347. Tyrosine 784 bears the Iodotyrosine mark. N-linked (GlcNAc...) (complex) asparagine; alternate glycosylation occurs at asparagine 853. The N-linked (GlcNAc...) (hybrid) asparagine; alternate glycan is linked to asparagine 853. Tyrosine 866 carries the post-translational modification Iodotyrosine; alternate. The residue at position 866 (tyrosine 866) is a Diiodotyrosine; alternate. The residue at position 883 (tyrosine 883) is a Diiodotyrosine. The N-linked (GlcNAc...) (complex) asparagine; alternate glycan is linked to asparagine 947. Asparagine 947 carries N-linked (GlcNAc...) (hybrid) asparagine; alternate glycosylation. Tyrosine 992 carries the post-translational modification Iodotyrosine; alternate. Tyrosine 992 carries the post-translational modification Diiodotyrosine; alternate. N-linked (GlcNAc...) (complex) asparagine; alternate glycosylation occurs at asparagine 1140. N-linked (GlcNAc...) (hybrid) asparagine; alternate glycosylation is present at asparagine 1140. Tyrosine 1310 is subject to Iodotyrosine. Tyrosine 1310 carries the post-translational modification Thyroxine. N-linked (GlcNAc...) (high mannose) asparagine glycosylation is present at asparagine 1365. Disulfide bonds link cysteine 1441/cysteine 1461, cysteine 1464/cysteine 1475, cysteine 1478/cysteine 1492, cysteine 1495/cysteine 1512, cysteine 1516/cysteine 1525, cysteine 1545/cysteine 1567, cysteine 1605/cysteine 1629, cysteine 1609/cysteine 1615, cysteine 1641/cysteine 1664, cysteine 1726/cysteine 1751, cysteine 1730/cysteine 1736, cysteine 1735/cysteine 1836, and cysteine 1762/cysteine 1779. Type II repeat units follow at residues 1458–1471 (ALGC…SYFQ), 1472–1488 (DEQC…EQAG), and 1489–1505 (SLAC…VYAG). Residue tyrosine 1469 is modified to Iodotyrosine; alternate. Tyrosine 1469 bears the Diiodotyrosine; alternate mark. Residues 1513 to 1567 (VTDCQKNEVGLQCDQDSQYRASQRDRTSGKAFCVDGEGRRLPWTEAEAPLVDAQC) form the Thyroglobulin type-1 11 domain. A Type IIIA repeat occupies 1605 to 1725 (CLADCALDEA…GASLAEVHLF (121 aa)). The stretch at 1726 to 1893 (CLLACDHDSC…LFSLQQANLW (168 aa)) is one Type IIIB repeat. N-linked (GlcNAc...) (complex) asparagine; alternate glycosylation is present at asparagine 1776. Asparagine 1776 carries N-linked (GlcNAc...) (hybrid) asparagine; alternate glycosylation. Basic and acidic residues predominate over residues 1827 to 1842 (MGSRSESMGCRRDTEP). The interval 1827–1851 (MGSRSESMGCRRDTEPRPASPSETD) is disordered. N-linked (GlcNAc...) (complex) asparagine; alternate glycosylation occurs at asparagine 1870. The N-linked (GlcNAc...) (hybrid) asparagine; alternate glycan is linked to asparagine 1870. Cystine bridges form between cysteine 1894–cysteine 1920, cysteine 1898–cysteine 1905, cysteine 1929–cysteine 1940, cysteine 1997–cysteine 2025, cysteine 2001–cysteine 2007, cysteine 2006–cysteine 2077, and cysteine 2036–cysteine 2049. Residues 1894-1996 (CLSRCAGEPS…DKSISSGFFE (103 aa)) form a Type IIIA repeat. A Type IIIB repeat occupies 1997–2130 (CERLCDMDPC…VGNFSAARDR (134 aa)). The N-linked (GlcNAc...) (high mannose) asparagine glycan is linked to asparagine 2014. An N-linked (GlcNAc...) (high mannose) asparagine glycan is attached at asparagine 2123. Cystine bridges form between cysteine 2131/cysteine 2155, cysteine 2135/cysteine 2141, and cysteine 2164/cysteine 2173. One copy of the Type IIIA repeat lies at 2131–2188 (CLWECSRHQDCLVTTLQTQPGAVRCMFYADTQSCTHSLQAQNCRLLLHEEATYIYRKP). Tyrosine 2185 is modified (iodotyrosine). The cholinesterase-like (ChEL) stretch occupies residues 2189-2769 (NIPLPGFGTS…PELASKTYSK (581 aa)). An N-linked (GlcNAc...) (complex) asparagine; alternate glycan is attached at asparagine 2251. An N-linked (GlcNAc...) (hybrid) asparagine; alternate glycan is attached at asparagine 2251. Residue asparagine 2296 is glycosylated (N-linked (GlcNAc...) (high mannose) asparagine). A disulfide bridge links cysteine 2443 with cysteine 2454. Tyrosine 2541 is modified (thyroxine). Iodotyrosine; alternate is present on tyrosine 2574. Residue tyrosine 2574 is modified to Thyroxine; alternate. The residue at position 2574 (tyrosine 2574) is a Triiodothyronine; alternate. The residue at position 2574 (tyrosine 2574) is a Diiodotyrosine; alternate. Iodotyrosine occurs at positions 2588 and 2618. A disulfide bridge connects residues cysteine 2592 and cysteine 2716. Tyrosine 2698 carries the post-translational modification Diiodotyrosine. The disordered stretch occupies residues 2730–2769 (ADETKDGPSADSEEEDQPAGSGLTEDLLGLPELASKTYSK). Tyrosine 2767 bears the Iodotyrosine; alternate mark. Tyrosine 2767 carries the post-translational modification Thyroxine; alternate. A Triiodothyronine; alternate modification is found at tyrosine 2767. Tyrosine 2767 bears the Diiodotyrosine; alternate mark.

It belongs to the type-B carboxylesterase/lipase family. As to quaternary structure, monomer. Homodimer (via ChEL region); occurs in the endoplasmic reticulum and is required for export to the Golgi apparatus. Homooligomer; disulfide-linked; stored in this form in the thyroid follicle lumen. Post-translationally, iodinated on tyrosine residues by TPO. There are 4 pairs of iodinated tyrosines used for coupling: acceptor Tyr-24 is coupled to donor Tyr-149 or Tyr-234, acceptor Tyr-2574 is coupled to donor Tyr-2541, acceptor Tyr-2767 in monomer 1 is coupled to donor Tyr-2767 in monomer 2 and acceptor Tyr-1310 in monomer 1 is coupled to donor Tyr-108 in monomer 2. Sulfated tyrosines are desulfated during iodination. In terms of processing, undergoes sequential proteolysis by cathepsins to release thyroxine (T4) and triiodothyronine (T3) hormones. In the thyroid follicle lumen, cross-linked TG (storage form) is solubilized by limited proteolysis mediated by cathepsins CTSB and/or CTSL. Partially cleaved TG is further processed by CTSK/cathepsin K and/or CTSL resulting in the release of T4. Following endocytosis, further processing occurs leading to the release of T3 and more T4 hormones. In terms of tissue distribution, specifically expressed in the thyroid gland.

It is found in the secreted. In terms of biological role, acts as a substrate for the production of iodinated thyroid hormones thyroxine (T4) and triiodothyronine (T3). The synthesis of T3 and T4 involves iodination of selected tyrosine residues of TG/thyroglobulin followed by their oxidative coupling. Following TG re-internalization and lysosomal-mediated proteolysis, T3 and T4 are released from the polypeptide backbone leading to their secretion into the bloodstream. One dimer produces 7 thyroid hormone molecules. The protein is Thyroglobulin (TG) of Bos taurus (Bovine).